Reading from the N-terminus, the 249-residue chain is Probable transcriptional regulatory protein HY04AAS1_0501 (249 aa).

It belongs to the TACO1 family.

The protein localises to the cytoplasm. This Hydrogenobaculum sp. (strain Y04AAS1) protein is Probable transcriptional regulatory protein HY04AAS1_0501.